Reading from the N-terminus, the 433-residue chain is 3-phosphoshikimate 1-carboxyvinyltransferase (433 aa).

3-phosphoshikimate-binding residues include Lys-22, Ser-23, and Arg-27. Lys-22 serves as a coordination point for phosphoenolpyruvate. Residues Gly-95 and Arg-123 each coordinate phosphoenolpyruvate. 3-phosphoshikimate contacts are provided by Ser-166, Gln-168, Asp-314, and Lys-341. Phosphoenolpyruvate is bound at residue Gln-168. Asp-314 functions as the Proton acceptor in the catalytic mechanism. Positions 345 and 386 each coordinate phosphoenolpyruvate.

The protein belongs to the EPSP synthase family. In terms of assembly, monomer.

The protein resides in the cytoplasm. It carries out the reaction 3-phosphoshikimate + phosphoenolpyruvate = 5-O-(1-carboxyvinyl)-3-phosphoshikimate + phosphate. Its pathway is metabolic intermediate biosynthesis; chorismate biosynthesis; chorismate from D-erythrose 4-phosphate and phosphoenolpyruvate: step 6/7. Catalyzes the transfer of the enolpyruvyl moiety of phosphoenolpyruvate (PEP) to the 5-hydroxyl of shikimate-3-phosphate (S3P) to produce enolpyruvyl shikimate-3-phosphate and inorganic phosphate. The protein is 3-phosphoshikimate 1-carboxyvinyltransferase of Acidithiobacillus ferrooxidans (strain ATCC 23270 / DSM 14882 / CIP 104768 / NCIMB 8455) (Ferrobacillus ferrooxidans (strain ATCC 23270)).